The sequence spans 481 residues: Inosine-5'-monophosphate dehydrogenase (481 aa).

2 consecutive CBS domains span residues 92–148 (VIND…SKKV) and 152–209 (MTKM…PEAN). NAD(+) is bound by residues aspartate 244 and 293–295 (GIG). Glycine 295 and glycine 297 together coordinate K(+). Serine 298 serves as a coordination point for IMP. Position 300 (cysteine 300) interacts with K(+). The active-site Thioimidate intermediate is cysteine 300. Residues 333–335 (DGG), 356–357 (GS), and 380–384 (YRGMG) contribute to the IMP site. Arginine 396 acts as the Proton acceptor in catalysis. Glutamate 410 provides a ligand contact to IMP. Positions 464, 465, and 466 each coordinate K(+).

This sequence belongs to the IMPDH/GMPR family. As to quaternary structure, homotetramer. Requires K(+) as cofactor.

The catalysed reaction is IMP + NAD(+) + H2O = XMP + NADH + H(+). The protein operates within purine metabolism; XMP biosynthesis via de novo pathway; XMP from IMP: step 1/1. Its activity is regulated as follows. Mycophenolic acid (MPA) is a non-competitive inhibitor that prevents formation of the closed enzyme conformation by binding to the same site as the amobile flap. In contrast, mizoribine monophosphate (MZP) is a competitive inhibitor that induces the closed conformation. MPA is a potent inhibitor of mammalian IMPDHs but a poor inhibitor of the bacterial enzymes. MZP is a more potent inhibitor of bacterial IMPDH. In terms of biological role, catalyzes the conversion of inosine 5'-phosphate (IMP) to xanthosine 5'-phosphate (XMP), the first committed and rate-limiting step in the de novo synthesis of guanine nucleotides, and therefore plays an important role in the regulation of cell growth. The chain is Inosine-5'-monophosphate dehydrogenase from Helicobacter pylori (strain ATCC 700392 / 26695) (Campylobacter pylori).